The primary structure comprises 120 residues: Chaperonin GroEL (120 aa).

23 to 27 (DGTTT) contributes to the ATP binding site.

Belongs to the chaperonin (HSP60) family. In terms of assembly, forms a cylinder of 14 subunits composed of two heptameric rings stacked back-to-back. Interacts with the co-chaperonin GroES.

It localises to the cytoplasm. It carries out the reaction ATP + H2O + a folded polypeptide = ADP + phosphate + an unfolded polypeptide.. Its function is as follows. Together with its co-chaperonin GroES, plays an essential role in assisting protein folding. The GroEL-GroES system forms a nano-cage that allows encapsulation of the non-native substrate proteins and provides a physical environment optimized to promote and accelerate protein folding. This chain is Chaperonin GroEL, found in Mycolicibacterium fallax (Mycobacterium fallax).